We begin with the raw amino-acid sequence, 1259 residues long: MPRRRRRRRAAPGGQVPPELRLAYGARALTLGRAVFSLLPSPRHCESPCPACRGRVASGCLACRRWEHLLRDGDPVAYRRLITRAVCAIAADDLSAPPPPRYTPGNSGHSQARLVREMMKSIVADQSHGTKNVLCNGLHEGGQSICISDLVSSSSWSILLHRIGDLLMCYLLRCTSIFLPVKKNDYFQVSGVPLNVVLRNPIFASTVARKHQPQTTKAKCHTCYLWKSANMAENLSICHDSSNSGVNSSFSSTCKIVTQQSCETCGSIRRAESKDPSEGCNCPKFPSDGRSGECCNCYTHNTRKRKRLYSWQRRSKKKQVCSVDESSAEWSKLNGSNFNMSNGPSENLAGKMNDQAQSVELTVDNTSLARSNDDSSSEIKVINATILSSEKSPCSVFDIRGSQGLSCHYSLSEVQYQSTCPQVGPSSYLHLNSCSICFNCIISNASKHLSLDSLISRNGIFYNRRTTYSVFHCKHILSKRKRPDALSLVKHIFGINSCCASLLKYNCHESTIRKSNCLCCWLPKSIKNLIRNSKRCQYKKLFLKHCSVKCKVAPDVTKNDGKAHYPPGGKAAYYDRSFSRLEAYSTHQQVASFVWAVLKRIVPKPLLGNSFGKRSLRTNIWKFIKLRRFETFQLSDCIGDLKVSHYSWLSNIEFSNCFCSAIIGKQTGSSTSAEEQKQKNILHCWISWLFSDIVIPVVRTYFYVTERESKRYDVFYYPKSVWRDLTSNAIASLNKKNFRILRGEPRKAVRHLNCSSRVRFLPKAKDMRPLVDLRAKSKDANLNKCHLIMKKLRDEKPEMFGSSVFDYNNVHQNLSQFISSKRSQLMKKLKVYIVVADVSKAFDCVSHDMVLKMIDDAFKCDEYTVRKCSKVICNRSKNSLYRFDSNASIGNGNSIYDLSIQLSSGGGIFVDQGTICRILKEQFHHLLYEQIKCNILKIGQKYYLQQVGIAQGSKLSPNLCSLYYGHLENSVLSKFLHDSKLNAGEAFSEPEYLLMRFIDDFIFISFSLEHAQKFLNRMRRGFVFYNCYMNDSKYGFNFCAGNSEPSSNRLYRGDDGVSFMPWSGLLINCETLEIQADYTRYLDITIISTITVKMHSSTKYIHSKLCHYMRPKCHPIFYDSNINSPGTIRVNIYQAFLLCAMKFHCYIRSVSDANVSKLELLQVIKRTFRYMHSLIVRRMQDVELHYNVRPVLKLRRKETIWLGLTAYIRVLQQKQSRYKDMLTLLTAELGRYCHLGHECDTLRYAVDDSHSSMFWKFKF.

The region spanning 742–1067 (RGEPRKAVRH…SFMPWSGLLI (326 aa)) is the Reverse transcriptase domain. 3 residues coordinate Mg(2+): aspartate 837, aspartate 999, and aspartate 1000.

This sequence belongs to the reverse transcriptase family. Telomerase subfamily. In terms of assembly, component of the telomerase ribonucleoprotein complex. Expressed in shoot apices and immature embryos.

It is found in the nucleus. The protein resides in the chromosome. It localises to the telomere. The enzyme catalyses DNA(n) + a 2'-deoxyribonucleoside 5'-triphosphate = DNA(n+1) + diphosphate. In terms of biological role, telomerase is a ribonucleoprotein enzyme essential for the replication of chromosome termini in most eukaryotes. It elongates telomeres. It is a reverse transcriptase that adds simple sequence repeats to chromosome ends by copying a template sequence within the RNA component of the enzyme. This is Telomerase reverse transcriptase (TERT) from Oryza sativa subsp. japonica (Rice).